We begin with the raw amino-acid sequence, 285 residues long: Probable endonuclease 4 (285 aa).

9 residues coordinate Zn(2+): H69, H109, E145, D179, H182, H216, D229, H231, and E261.

This sequence belongs to the AP endonuclease 2 family. Zn(2+) serves as cofactor.

It catalyses the reaction Endonucleolytic cleavage to 5'-phosphooligonucleotide end-products.. Functionally, endonuclease IV plays a role in DNA repair. It cleaves phosphodiester bonds at apurinic or apyrimidinic (AP) sites, generating a 3'-hydroxyl group and a 5'-terminal sugar phosphate. This Escherichia coli O127:H6 (strain E2348/69 / EPEC) protein is Probable endonuclease 4.